A 3032-amino-acid polypeptide reads, in one-letter code: Compactin nonaketide synthase, polyketide synthase component (3032 aa).

One can recognise a Ketosynthase family 3 (KS3) domain in the interval 8–447; that stretch reads NEPIVVVGSG…GTNAHAIIEE (440 aa). Catalysis depends on for beta-ketoacyl synthase activity residues C181, H320, and H367. The acyl and malonyl transferase stretch occupies residues 560–901; it reads VFTGQGAQWP…GYIWERFGVR (342 aa). S654 serves as the catalytic For malonyltransferase activity. The tract at residues 953 to 1089 is N-terminal hotdog fold; that stretch reads HLLLGKLSSY…GQIVITLGEA (137 aa). The PKS/mFAS DH domain maps to 953 to 1261; it reads HLLLGKLSSY…FKPFSPPTAS (309 aa). H985 serves as the catalytic Proton acceptor; for dehydratase activity. Residues 985–997 form a dehydratase-like region; the sequence is HALQGQTVFPAAG. A C-terminal hotdog fold region spans residues 1106 to 1261; that stretch reads MNNVNIDFFY…FKPFSPPTAS (156 aa). D1168 (proton donor; for dehydratase activity) is an active-site residue. Positions 1506–1544 are methyltransferase; it reads YDLIIASDVLHASSNFEEKLAHIRSLLKPGGHLVTFGVT. The 80-residue stretch at 2441–2520 folds into the Carrier domain; the sequence is DQVRQIVIDG…DLADDAATRL (80 aa). S2480 carries the O-(pantetheine 4'-phosphoryl)serine modification. Residues 2531 to 2580 form a disordered region; sequence IGDSTGTSDSGASPTPTDSHDEASSATSTDASSAEEDEEQEDDNEQGGRK. Low complexity predominate over residues 2532-2547; sequence GDSTGTSDSGASPTPT. Residues 2563–2575 are compositionally biased toward acidic residues; that stretch reads SAEEDEEQEDDNE. Residues 2586-2946 form a peptide synthetase elongation region; the sequence is RLSLGQEYSW…PKTQTHAPLF (361 aa).

Requires pantetheine 4'-phosphate as cofactor.

The catalysed reaction is holo-[compactin nonaketide synthase] + 9 malonyl-CoA + 11 NADPH + 20 H(+) = dihydro-ML-236C-[compactin nonaketide synthase] + 9 CO2 + 11 NADP(+) + 9 CoA + 6 H2O. Its pathway is polyketide biosynthesis. In terms of biological role, nonaketide synthase; part of the gene cluster that mediates the biosynthesis of compactin, also known as mevastatin or ML-236B, and which acts as a potent competitive inhibitor of HMG-CoA reductase. Compactin biosynthesis is performed in two stages. The first stage is catalyzed by the nonaketide synthase mlcA, which belongs to type I polyketide synthases and catalyzes the iterative nine-step formation of the polyketide. This PKS stage is completed by the action of dehydrogenase mlcG, which catalyzes the NADPH-dependent reduction of the unsaturated tetra-, penta- and heptaketide intermediates that arise during the mlcA-mediated biosynthesis of the nonaketide chain and leads to dihydro-ML-236C carboxylate. Covalently bound dihydro-ML-236C carboxylate is released from mlcA by the mlcF esterase. Conversion of dihydro-ML-236C carboxylate into ML-236A carboxylate is subsequently performed with the participation of molecular oxygen and P450 monoogygenase mlcC. Finally, mlcH performs the conversion of ML-236A carboxylate to ML-236B/compactin carboxylate through the addition of the side-chain diketide moiety produced by the diketide synthase mlcB. This Penicillium citrinum protein is Compactin nonaketide synthase, polyketide synthase component.